The sequence spans 783 residues: Transcription factor E4F1 (783 aa).

The segment at 40-84 (GFLGLPAPFSEEDEDDVHRCGRCQVEFTALEDFVQHKIQKTCHRA) is required for ubiquitin ligase activity. Residue Ser-49 is modified to Phosphoserine. The mediates dimerization, DNA-binding, transcription repression of CCNA2 and interaction with HMGA2 stretch occupies residues 185 to 264 (LLVNKEGRYV…GKSFRESGAL (80 aa)). 2 C2H2-type zinc fingers span residues 193–215 (YVCM…MVTH) and 221–243 (HECK…HRRH). A C2H2-type 3; degenerate zinc finger spans residues 249–273 (YKCAKCGKSFRESGALTRHLKSLTP). A mediates interaction with CDKN2A region spans residues 368-565 (NLLHQAMQNS…REKGSLVRHV (198 aa)). Positions 386–407 (GEESALEPAPPSGSSPQCLGDG) are disordered. 5 consecutive C2H2-type zinc fingers follow at residues 434-456 (HPCP…KRGH), 462-484 (FTCT…QEVH), 490-512 (FRCG…RRVH), 518-540 (FPCP…FRTH), and 546-568 (HVCQ…VRHH). The interval 434–598 (HPCPQCSETF…LNRHLRTKGG (165 aa)) is interaction with BMI1. The segment at 520 to 579 (CPQCGKRYKTKNAQQVHFRTHLEEKPHVCQFCSRGFREKGSLVRHVRHHTGEKPFKCYKC) is mediates interaction with TP53. Residues 574 to 596 (FKCYKCGRGFAEHGTLNRHLRTK) form a C2H2-type 9; degenerate zinc finger. The mediates interaction with RASSF1 stretch occupies residues 574–596 (FKCYKCGRGFAEHGTLNRHLRTK).

Homodimer; binds DNA as a dimer. Forms a complex with CDKN2A and TP53. Interacts with HDAC1, HMGA2 and RASSF1. Interactions with TP53, RB1, ANP32A and probably BMI1 and FHL2 regulate E4F1 activity. In terms of processing, phosphorylated; phosphorylation is cell cycle-dependent and regulates DNA-binding activity and function. Post-translationally, may be sumoylated by UBE2I upon interaction with CDKN2A. Ubiquitously expressed.

It is found in the nucleus. It localises to the nucleoplasm. The protein resides in the cytoplasm. The enzyme catalyses S-ubiquitinyl-[E2 ubiquitin-conjugating enzyme]-L-cysteine + [acceptor protein]-L-lysine = [E2 ubiquitin-conjugating enzyme]-L-cysteine + N(6)-ubiquitinyl-[acceptor protein]-L-lysine.. It functions in the pathway protein modification; protein ubiquitination. In terms of biological role, may function as a transcriptional repressor. May also function as a ubiquitin ligase mediating ubiquitination of chromatin-associated TP53. Functions in cell survival and proliferation through control of the cell cycle. Functions in the p53 and pRB tumor suppressor pathways and regulates the cyclin CCNA2 transcription. The polypeptide is Transcription factor E4F1 (E4f1) (Mus musculus (Mouse)).